The following is a 727-amino-acid chain: Catalase-peroxidase (727 aa).

The segment at 1 to 26 (MSDEKKCPVTGRTSSQVAGSGTSNKD) is disordered. The segment covering 11–26 (GRTSSQVAGSGTSNKD) has biased composition (polar residues). The tryptophyl-tyrosyl-methioninium (Trp-Tyr) (with M-245) cross-link spans 96 to 219 (WHSAGTYRIG…LAAVQMGLIY (124 aa)). His97 acts as the Proton acceptor in catalysis. The segment at residues 219–245 (YVNPEGPNGDPNAVASGKDVRETFARM) is a cross-link (tryptophyl-tyrosyl-methioninium (Tyr-Met) (with W-96)). Residue His260 coordinates heme b. Positions 346-362 (SDPEAKKAVPDAHDPSK) are enriched in basic and acidic residues. The disordered stretch occupies residues 346–365 (SDPEAKKAVPDAHDPSKTHP).

It belongs to the peroxidase family. Peroxidase/catalase subfamily. In terms of assembly, homodimer or homotetramer. It depends on heme b as a cofactor. Formation of the three residue Trp-Tyr-Met cross-link is important for the catalase, but not the peroxidase activity of the enzyme.

The catalysed reaction is H2O2 + AH2 = A + 2 H2O. It carries out the reaction 2 H2O2 = O2 + 2 H2O. Its function is as follows. Bifunctional enzyme with both catalase and broad-spectrum peroxidase activity. This Maridesulfovibrio salexigens (strain ATCC 14822 / DSM 2638 / NCIMB 8403 / VKM B-1763) (Desulfovibrio salexigens) protein is Catalase-peroxidase.